Here is a 496-residue protein sequence, read N- to C-terminus: 3-octaprenyl-4-hydroxybenzoate carboxy-lyase (496 aa).

Position 181 (Asn-181) interacts with Mn(2+). Residues 184–186 (IYR), 198–200 (RWL), and 203–204 (RG) each bind prenylated FMN. Glu-247 serves as a coordination point for Mn(2+). The Proton donor role is filled by Asp-296.

Belongs to the UbiD family. Homohexamer. Prenylated FMN is required as a cofactor. The cofactor is Mn(2+).

The protein resides in the cell membrane. It catalyses the reaction a 4-hydroxy-3-(all-trans-polyprenyl)benzoate + H(+) = a 2-(all-trans-polyprenyl)phenol + CO2. It functions in the pathway cofactor biosynthesis; ubiquinone biosynthesis. In terms of biological role, catalyzes the decarboxylation of 3-octaprenyl-4-hydroxy benzoate to 2-octaprenylphenol, an intermediate step in ubiquinone biosynthesis. The chain is 3-octaprenyl-4-hydroxybenzoate carboxy-lyase from Aromatoleum aromaticum (strain DSM 19018 / LMG 30748 / EbN1) (Azoarcus sp. (strain EbN1)).